A 781-amino-acid chain; its full sequence is Catalase-peroxidase (781 aa).

The N-terminal stretch at 1 to 20 (MLYIYYLFKSLFFHTLFVFS) is a signal peptide. Residues 125 to 272 (WHSAGTYRIG…LAAVQMGLIY (148 aa)) constitute a cross-link (tryptophyl-tyrosyl-methioninium (Trp-Tyr) (with M-298)). The active-site Proton acceptor is His126. Residues 237 to 256 (VHHPDEHRGAKEKAAKNSDS) form a disordered region. The tryptophyl-tyrosyl-methioninium (Tyr-Met) (with W-125) cross-link spans 272-298 (YVNPEGPDGRPDPLASARDIRETFARM). His313 provides a ligand contact to heme b. The disordered stretch occupies residues 317–336 (KTHGAAPADNVGPEPEAGEL).

It belongs to the peroxidase family. Peroxidase/catalase subfamily. As to quaternary structure, homodimer or homotetramer. Requires heme b as cofactor. In terms of processing, formation of the three residue Trp-Tyr-Met cross-link is important for the catalase, but not the peroxidase activity of the enzyme.

The catalysed reaction is H2O2 + AH2 = A + 2 H2O. It catalyses the reaction 2 H2O2 = O2 + 2 H2O. In terms of biological role, bifunctional enzyme with both catalase and broad-spectrum peroxidase activity. The protein is Catalase-peroxidase of Xylella fastidiosa (strain 9a5c).